A 95-amino-acid chain; its full sequence is CRISPR-associated endoribonuclease Cas2 1 (95 aa).

Asp-11 is a Mg(2+) binding site.

Belongs to the CRISPR-associated endoribonuclease Cas2 protein family. As to quaternary structure, homodimer, forms a heterotetramer with a Cas1 homodimer. Mg(2+) serves as cofactor.

CRISPR (clustered regularly interspaced short palindromic repeat), is an adaptive immune system that provides protection against mobile genetic elements (viruses, transposable elements and conjugative plasmids). CRISPR clusters contain sequences complementary to antecedent mobile elements and target invading nucleic acids. CRISPR clusters are transcribed and processed into CRISPR RNA (crRNA). Functions as a ssRNA-specific endoribonuclease. Involved in the integration of spacer DNA into the CRISPR cassette. This is CRISPR-associated endoribonuclease Cas2 1 from Methanospirillum hungatei JF-1 (strain ATCC 27890 / DSM 864 / NBRC 100397 / JF-1).